We begin with the raw amino-acid sequence, 367 residues long: 3-dehydroquinate synthase (367 aa).

NAD(+) contacts are provided by residues 69–74 (DGEAFK), 103–107 (GVIGD), 127–128 (TT), lysine 140, and lysine 149. Residues glutamate 182, histidine 245, and histidine 262 each contribute to the Zn(2+) site.

This sequence belongs to the sugar phosphate cyclases superfamily. Dehydroquinate synthase family. It depends on Co(2+) as a cofactor. Zn(2+) serves as cofactor. Requires NAD(+) as cofactor.

The protein resides in the cytoplasm. The enzyme catalyses 7-phospho-2-dehydro-3-deoxy-D-arabino-heptonate = 3-dehydroquinate + phosphate. The protein operates within metabolic intermediate biosynthesis; chorismate biosynthesis; chorismate from D-erythrose 4-phosphate and phosphoenolpyruvate: step 2/7. Its function is as follows. Catalyzes the conversion of 3-deoxy-D-arabino-heptulosonate 7-phosphate (DAHP) to dehydroquinate (DHQ). This chain is 3-dehydroquinate synthase, found in Ectopseudomonas mendocina (strain ymp) (Pseudomonas mendocina).